The chain runs to 210 residues: Outer surface protein C (210 aa).

Residues 1–18 (MKKNTLSAILMTLFLFIS) form the signal peptide. Residue Cys19 is the site of N-palmitoyl cysteine attachment. The S-diacylglycerol cysteine moiety is linked to residue Cys19.

The protein belongs to the OspC lipoprotein family. Homodimer. Binds human plasminogen on the bacterial surface, also binds human plasmin. Interacts with tick I.ricinus salivary protein Iric-1. Interacts with human complement C4 beta chain (C4B); whole bacteria bind to wells coated with C4b. Binding is inhibited by human complement factor C2.

It is found in the cell outer membrane. It localises to the cell surface. Its function is as follows. A major immunodominant protein in mammalian hosts. Required for the initial stages of mammalian infection. Interaction with tick I.ricinus salivary protein Salp15 protects the bacteria from antibody-mediated killing in vitro and in vivo. Inhibits macrophage-mediated phagocytosis of the bacteria. Binds human plasminogen; this probably confers an extracellular protease activity on the bacteria that allows it to traverse tissue. Binds human complement C4-B, which may inhibit the complement cascade. Experiments in mice suggest it may play another role after initial infection. In Borreliella burgdorferi (strain ATCC 35210 / DSM 4680 / CIP 102532 / B31) (Borrelia burgdorferi), this protein is Outer surface protein C.